Reading from the N-terminus, the 174-residue chain is Isomerase prhC (174 aa).

Belongs to the trt14 isomerase family. Homodimer.

It participates in secondary metabolite biosynthesis; terpenoid biosynthesis. Isomerase; part of the gene cluster that mediates the biosynthesis of paraherquonin, a meroterpenoid with a unique, highly congested hexacyclic molecular architecture. The first step of the pathway is the synthesis of 3,5-dimethylorsellinic acid (DMOA) by the polyketide synthase prhL. Synthesis of DMOA is followed by farnesylation by the prenyltransferase prhE, methylesterification by the methyl-transferase prhM, epoxidation of the prenyl chain by the flavin-dependent monooxygenase prhF, and cyclization of the farnesyl moiety by the terpene cyclase prhH, to yield the tetracyclic intermediate, protoaustinoid A. The short chain dehydrogenase prhI then oxidizes the C-3 alcohol group of the terpene cyclase product to transform protoaustinoid A into protoaustinoid B. The FAD-binding monooxygenase prhJ catalyzes the oxidation of protoaustinoid B into preaustinoid A which is further oxidized into preaustinoid A1 by FAD-binding monooxygenase phrK. Finally, prhA leads to berkeleydione via the berkeleyone B intermediate. PrhA is a multifunctional dioxygenase that first desaturates at C5-C6 to form berkeleyone B, followed by rearrangement of the A/B-ring to form the cycloheptadiene moiety in berkeleydione. Berkeleydione serves as the key intermediate for the biosynthesis of paraherquonin as well as many other meroterpenoids. The cytochrome P450 monooxygenases prhB, prhD, and prhN, as well as the isomerase prhC, are probably involved in the late stage of paraherquonin biosynthesis, after the production of berkeleydione. Especially prhC might be a multifunctional enzyme that catalyzes the D-ring expansion via intramolecular methoxy rearrangement, as well as the hydrolysis of the expanded D-ring. The sequence is that of Isomerase prhC from Penicillium brasilianum.